Here is a 179-residue protein sequence, read N- to C-terminus: Signal peptidase complex subunit 2 (179 aa).

The Cytoplasmic portion of the chain corresponds to 1–48; it reads MSGNNVQEEDSTFHVSNLYSETEIKKITQDFISEKIREQNFEEIVKYS. A helical transmembrane segment spans residues 49 to 69; it reads NIRIFLSLVLIVIGTYCSIFV. Residues 70-74 are Extracellular-facing; that stretch reads QYKKN. A helical transmembrane segment spans residues 75 to 95; the sequence is PVIMIQLLVAFFVVSTTLIIF. Over 96–179 the chain is Cytoplasmic; it reads EYFFFDDVFM…AHGRTLKLKN (84 aa).

Belongs to the SPCS2 family. In terms of assembly, component of the signal peptidase complex (SPC) composed of a catalytic subunit SEC11/SPC21 and three accessory subunits SPC25, SPC3/SPC22, SPC1/SPC12. The complex induces a local thinning of the ER membrane which is used to measure the length of the signal peptide (SP) h-region of protein substrates. This ensures the selectivity of the complex towards h-regions shorter than 18-20 amino acids. Within the complex, interacts with SEC11/SPC21. Component of a complex composed of SPC25 and PMV; the interaction is mediated via the transmembrane domains. The complex interacts with the SEC61 channel-forming translocon complex and is involved in the recognition and import of PEXEL motif-containing proteins into the ER for subsequent export.

The protein resides in the endoplasmic reticulum membrane. Functionally, component of the signal peptidase complex (SPC) which catalyzes the cleavage of N-terminal signal sequences from nascent proteins as they are translocated into the lumen of the endoplasmic reticulum. Enhances the enzymatic activity of SPC and facilitates the interactions between different components of the translocation site. Also, regulatory component of the CSP25-plasmepsin PMV complex which cleaves the pentameric localization motif RxLxE/Q/D (termed Plasmodium export element (PEXEL)) located downstream of the N-terminal secretory signal sequence of several proteins. The protein is Signal peptidase complex subunit 2 of Plasmodium falciparum (isolate 3D7).